The sequence spans 283 residues: Release factor glutamine methyltransferase (283 aa).

Residues 121–125 (GTGSG), Asp-144, and Asn-188 contribute to the S-adenosyl-L-methionine site. Substrate is bound at residue 188–191 (NPPY).

It belongs to the protein N5-glutamine methyltransferase family. PrmC subfamily.

It catalyses the reaction L-glutaminyl-[peptide chain release factor] + S-adenosyl-L-methionine = N(5)-methyl-L-glutaminyl-[peptide chain release factor] + S-adenosyl-L-homocysteine + H(+). Its function is as follows. Methylates the class 1 translation termination release factors RF1/PrfA and RF2/PrfB on the glutamine residue of the universally conserved GGQ motif. The chain is Release factor glutamine methyltransferase from Bacillus cereus (strain ATCC 14579 / DSM 31 / CCUG 7414 / JCM 2152 / NBRC 15305 / NCIMB 9373 / NCTC 2599 / NRRL B-3711).